Reading from the N-terminus, the 144-residue chain is Angiogenin-4 (144 aa).

An N-terminal signal peptide occupies residues 1–24; the sequence is MTMSPCPLLLVFVLGLVVIPPTLA. Catalysis depends on His-36, which acts as the Proton acceptor. Intrachain disulfides connect Cys-49–Cys-103, Cys-62–Cys-114, and Cys-80–Cys-129. A Nucleolar localization signal motif is present at residues 54-58; sequence KERKL. The active-site Proton donor is the His-136.

This sequence belongs to the pancreatic ribonuclease family. Detected in small intestine, caecum and colon, with the highest expression in Paneth cells in the intestinal epithelium.

The protein resides in the secreted. The protein localises to the cytoplasmic vesicle. Its subcellular location is the secretory vesicle lumen. It is found in the nucleus. It localises to the nucleolus. Functionally, has bactericidal activity against E.faecalis and L.monocytogenes, but not against L.innocua and E.coli. Promotes angiogenesis (in vitro). Has low ribonuclease activity (in vitro). Promotes proliferation of melanoma cells, but not of endothelial cells or fibroblasts (in vitro). This chain is Angiogenin-4 (Ang4), found in Mus musculus (Mouse).